Reading from the N-terminus, the 695-residue chain is NADPH--cytochrome P450 reductase (695 aa).

The Lumenal segment spans residues 1 to 8 (MAQLDTLD). A helical membrane pass occupies residues 9-31 (VVVLAVLLAGSIAYFTKGTFWAV). Residues 32–695 (AKDPYASSGP…SGSYQEDVWS (664 aa)) are Cytoplasmic-facing. Positions 66–221 (CVIFYGSQTG…DFLAWKEPMW (156 aa)) constitute a Flavodoxin-like domain. FMN is bound by residues 72 to 77 (SQTGTA), 123 to 126 (ATYG), 169 to 178 (LGNNTYEHYN), and D204. The region spanning 277-538 (HNPYIAPIVE…HVRHSNFKLP (262 aa)) is the FAD-binding FR-type domain. R296 is a binding site for NADP(+). Residues 451–454 (RYYS), 469–471 (TAV), and 486–489 (GVTT) each bind FAD. The interval 497-516 (QKQNGDPSPDPHGQTYAING) is disordered. NADP(+) contacts are provided by residues T552, 614-615 (SR), 620-624 (KVYVQ), and E656. An FAD-binding site is contributed by W694.

The protein belongs to the NADPH--cytochrome P450 reductase family. In the N-terminal section; belongs to the flavodoxin family. This sequence in the C-terminal section; belongs to the flavoprotein pyridine nucleotide cytochrome reductase family. It depends on FAD as a cofactor. Requires FMN as cofactor.

The protein localises to the endoplasmic reticulum membrane. The protein resides in the mitochondrion outer membrane. It is found in the cell membrane. It catalyses the reaction 2 oxidized [cytochrome P450] + NADPH = 2 reduced [cytochrome P450] + NADP(+) + H(+). This enzyme is required for electron transfer from NADP to cytochrome P450 in microsomes. It can also provide electron transfer to heme oxygenase and cytochrome B5. Involved in ergosterol biosynthesis. In Emericella nidulans (strain FGSC A4 / ATCC 38163 / CBS 112.46 / NRRL 194 / M139) (Aspergillus nidulans), this protein is NADPH--cytochrome P450 reductase.